A 177-amino-acid chain; its full sequence is Large ribosomal subunit protein uL6 (177 aa).

Belongs to the universal ribosomal protein uL6 family. Part of the 50S ribosomal subunit.

In terms of biological role, this protein binds to the 23S rRNA, and is important in its secondary structure. It is located near the subunit interface in the base of the L7/L12 stalk, and near the tRNA binding site of the peptidyltransferase center. This Methanocella arvoryzae (strain DSM 22066 / NBRC 105507 / MRE50) protein is Large ribosomal subunit protein uL6.